The chain runs to 248 residues: Cytochrome c oxidase subunit 2 (248 aa).

Residues 1-36 lie on the Mitochondrial intermembrane side of the membrane; the sequence is MLFFNSILNDAPSSWALYFQDGASPSYLGVTHLNDY. The chain crosses the membrane as a helical span at residues 37-57; sequence LMFYLTFIFIGVIYAICKAVI. Over 58 to 75 the chain is Mitochondrial matrix; that stretch reads EYNYNSHPIAAKYTTHGS. A helical membrane pass occupies residues 76 to 100; it reads IVEFIWTLIPALILILVALPSFKLL. The Mitochondrial intermembrane segment spans residues 101–248; the sequence is YLLDEVQKPS…DFLAWLEENS (148 aa). Positions 182, 217, 219, 221, 225, and 228 each coordinate Cu cation. Glu219 contributes to the Mg(2+) binding site.

It belongs to the cytochrome c oxidase subunit 2 family. As to quaternary structure, component of the cytochrome c oxidase (complex IV, CIV), a multisubunit enzyme composed of a catalytic core of 3 subunits and several supernumerary subunits. The complex exists as a monomer or a dimer and forms supercomplexes (SCs) in the inner mitochondrial membrane with ubiquinol-cytochrome c oxidoreductase (cytochrome b-c1 complex, complex III, CIII). It depends on Cu cation as a cofactor.

It localises to the mitochondrion inner membrane. The enzyme catalyses 4 Fe(II)-[cytochrome c] + O2 + 8 H(+)(in) = 4 Fe(III)-[cytochrome c] + 2 H2O + 4 H(+)(out). Functionally, component of the cytochrome c oxidase, the last enzyme in the mitochondrial electron transport chain which drives oxidative phosphorylation. The respiratory chain contains 3 multisubunit complexes succinate dehydrogenase (complex II, CII), ubiquinol-cytochrome c oxidoreductase (cytochrome b-c1 complex, complex III, CIII) and cytochrome c oxidase (complex IV, CIV), that cooperate to transfer electrons derived from NADH and succinate to molecular oxygen, creating an electrochemical gradient over the inner membrane that drives transmembrane transport and the ATP synthase. Cytochrome c oxidase is the component of the respiratory chain that catalyzes the reduction of oxygen to water. Electrons originating from reduced cytochrome c in the intermembrane space (IMS) are transferred via the dinuclear copper A center (CU(A)) of subunit 2 and heme A of subunit 1 to the active site in subunit 1, a binuclear center (BNC) formed by heme A3 and copper B (CU(B)). The BNC reduces molecular oxygen to 2 water molecules using 4 electrons from cytochrome c in the IMS and 4 protons from the mitochondrial matrix. This is Cytochrome c oxidase subunit 2 (cox2) from Schizosaccharomyces pombe (strain 972 / ATCC 24843) (Fission yeast).